Consider the following 192-residue polypeptide: Xanthine phosphoribosyltransferase (192 aa).

Residues L20 and N27 each coordinate xanthine. 128-132 (ANGQA) contacts 5-phospho-alpha-D-ribose 1-diphosphate. K156 provides a ligand contact to xanthine.

Belongs to the purine/pyrimidine phosphoribosyltransferase family. Xpt subfamily. Homodimer.

Its subcellular location is the cytoplasm. The catalysed reaction is XMP + diphosphate = xanthine + 5-phospho-alpha-D-ribose 1-diphosphate. It participates in purine metabolism; XMP biosynthesis via salvage pathway; XMP from xanthine: step 1/1. In terms of biological role, converts the preformed base xanthine, a product of nucleic acid breakdown, to xanthosine 5'-monophosphate (XMP), so it can be reused for RNA or DNA synthesis. The polypeptide is Xanthine phosphoribosyltransferase (Listeria monocytogenes serotype 4b (strain CLIP80459)).